Reading from the N-terminus, the 317-residue chain is MASATNSSLSLMLLVAAAMASVASAQLSATFYDTSCPNALSTIKSVITAAVNSEARMGASLLRLHFHDCFVQGCDASVLLSGQEQNAGPNVGSLRGFSVIDNAKARVEAICNQTVSCADILAVAARDSVVALGGPSWTVLLGRRDSTTASEALANTDLPAPSSSLAELIGNFSRKGLDATDMVALSGAHTIGQAQCQNFRDRIYNETNIDSAFATQRQANCPRPTGSGDSNLAPLDTTTPNAFDNAYYSNLLSNKGLLHSDQVLFNGGSADNTVRNFASNAAAFSSAFTTAMVKMGNISPLTGTQGQIRLSCSKVNS.

The N-terminal stretch at 1–25 is a signal peptide; it reads MASATNSSLSLMLLVAAAMASVASA. Gln-26 bears the Pyrrolidone carboxylic acid mark. 2 disulfide bridges follow: Cys-36/Cys-111 and Cys-69/Cys-74. Catalysis depends on His-67, which acts as the Proton acceptor. Residues Asp-68, Val-71, Gly-73, Asp-75, and Ser-77 each coordinate Ca(2+). Asn-112 carries an N-linked (GlcNAc...) asparagine glycan. 2 disulfide bridges follow: Cys-117-Cys-312 and Cys-196-Cys-221. Residue Pro-159 coordinates substrate. Asn-171 is a glycosylation site (N-linked (GlcNAc...) asparagine). A heme b-binding site is contributed by His-189. Thr-190 contacts Ca(2+). Residue Asn-205 is glycosylated (N-linked (GlcNAc...) asparagine). The Ca(2+) site is built by Asp-236, Thr-239, and Asp-244.

The protein belongs to the peroxidase family. Classical plant (class III) peroxidase subfamily. Heme b serves as cofactor. It depends on Ca(2+) as a cofactor.

Its subcellular location is the secreted. The catalysed reaction is H2O2 + AH2 = A + 2 H2O. Functionally, removal of H(2)O(2), oxidation of toxic reductants, biosynthesis and degradation of lignin, suberization, auxin catabolism, response to environmental stresses such as wounding, pathogen attack and oxidative stress. These functions might be dependent on each isozyme/isoform in each plant tissue. In Oryza sativa subsp. japonica (Rice), this protein is Peroxidase 22.3.